The following is a 211-amino-acid chain: MRLRNKPWAEDYLRKHNTVVDLDGTHAGKMSEWFEKDQPIYIEVGSGMGQFITELAAQHPEVNFVSLERDKNVMIRVLDKVLEKDLQNIKLICNDAMELTDYFKDGEVDRVYLNFSDPWPKKRHAKRRLTYHSFLALYKAILKDEGEIHFKTDNRGLFAYSLESMSQFGMYFTKINLNLHDEDDEDNIETEYELKFADKGSRIYRMEAKFH.

S-adenosyl-L-methionine is bound by residues Glu43, Glu68, Asp95, and Asp117. Asp117 is a catalytic residue. Residues Lys121, Asp153, and 190 to 193 (TEYE) contribute to the substrate site.

The protein belongs to the class I-like SAM-binding methyltransferase superfamily. TrmB family.

It catalyses the reaction guanosine(46) in tRNA + S-adenosyl-L-methionine = N(7)-methylguanosine(46) in tRNA + S-adenosyl-L-homocysteine. The protein operates within tRNA modification; N(7)-methylguanine-tRNA biosynthesis. Functionally, catalyzes the formation of N(7)-methylguanine at position 46 (m7G46) in tRNA. The polypeptide is tRNA (guanine-N(7)-)-methyltransferase (Staphylococcus carnosus (strain TM300)).